A 359-amino-acid chain; its full sequence is Short chain dehydrogenase resG (359 aa).

5 residues coordinate NADP(+): K87, D110, N137, Y237, and K241. Y237 functions as the Proton donor in the catalytic mechanism. K241 serves as the catalytic Lowers pKa of active site Tyr.

It belongs to the short-chain dehydrogenases/reductases (SDR) family.

Its pathway is antifungal biosynthesis. Functionally, short chain dehydrogenase; part of the gene cluster that mediates the biosynthesis of the tetrahydropyranyl antifungal agent restricticin that acts as an inhibitor of CYP51 and blocks the ergosterol biosynthesis. The highly reducing polyketide synthase resH, the short chain dehydrogenase resG, the cyclase resF, the FAD-dependent monooxygenase resA and the enoylreductase resD are required to generate the first stable intermediate desmethylrestrictinol. ResH with resD biosynthesize the first polyketide chain intermediate that is reduced by resG, followed by epoxidation by resA before 6-endo cyclization via epoxide opening by resF leads to desmethylrestrictinol. The methyltransferase resE then catalyzes the C4 O-methylation of desmethylrestrictinol to produce restrictinol, and the nonribosomal peptide synthetase resC catalyzes the C3 esterification of restrictinol with glycine that leads to restricticin. The polypeptide is Short chain dehydrogenase resG (Aspergillus sclerotiorum).